Consider the following 357-residue polypeptide: UDP-N-acetylglucosamine--N-acetylmuramyl-(pentapeptide) pyrophosphoryl-undecaprenol N-acetylglucosamine transferase (357 aa).

UDP-N-acetyl-alpha-D-glucosamine-binding positions include 15–17 (TGG), asparagine 123, arginine 164, serine 190, and glutamine 284.

The protein belongs to the glycosyltransferase 28 family. MurG subfamily.

It localises to the cell inner membrane. The catalysed reaction is di-trans,octa-cis-undecaprenyl diphospho-N-acetyl-alpha-D-muramoyl-L-alanyl-D-glutamyl-meso-2,6-diaminopimeloyl-D-alanyl-D-alanine + UDP-N-acetyl-alpha-D-glucosamine = di-trans,octa-cis-undecaprenyl diphospho-[N-acetyl-alpha-D-glucosaminyl-(1-&gt;4)]-N-acetyl-alpha-D-muramoyl-L-alanyl-D-glutamyl-meso-2,6-diaminopimeloyl-D-alanyl-D-alanine + UDP + H(+). The protein operates within cell wall biogenesis; peptidoglycan biosynthesis. In terms of biological role, cell wall formation. Catalyzes the transfer of a GlcNAc subunit on undecaprenyl-pyrophosphoryl-MurNAc-pentapeptide (lipid intermediate I) to form undecaprenyl-pyrophosphoryl-MurNAc-(pentapeptide)GlcNAc (lipid intermediate II). This is UDP-N-acetylglucosamine--N-acetylmuramyl-(pentapeptide) pyrophosphoryl-undecaprenol N-acetylglucosamine transferase from Synechococcus elongatus (strain ATCC 33912 / PCC 7942 / FACHB-805) (Anacystis nidulans R2).